Consider the following 489-residue polypeptide: UDP-N-acetylmuramoyl-L-alanyl-D-glutamate--2,6-diaminopimelate ligase (489 aa).

Serine 30 lines the UDP-N-acetyl-alpha-D-muramoyl-L-alanyl-D-glutamate pocket. Position 108 to 114 (108 to 114 (GTNGKTT)) interacts with ATP. Residues asparagine 149, 150 to 151 (TT), serine 177, glutamine 183, and arginine 185 each bind UDP-N-acetyl-alpha-D-muramoyl-L-alanyl-D-glutamate. Lysine 217 carries the N6-carboxylysine modification. Residues arginine 383, 407–410 (DNPR), glycine 459, and glutamate 463 contribute to the meso-2,6-diaminopimelate site. Residues 407–410 (DNPR) carry the Meso-diaminopimelate recognition motif motif.

This sequence belongs to the MurCDEF family. MurE subfamily. Mg(2+) is required as a cofactor. Post-translationally, carboxylation is probably crucial for Mg(2+) binding and, consequently, for the gamma-phosphate positioning of ATP.

The protein localises to the cytoplasm. It carries out the reaction UDP-N-acetyl-alpha-D-muramoyl-L-alanyl-D-glutamate + meso-2,6-diaminopimelate + ATP = UDP-N-acetyl-alpha-D-muramoyl-L-alanyl-gamma-D-glutamyl-meso-2,6-diaminopimelate + ADP + phosphate + H(+). Its pathway is cell wall biogenesis; peptidoglycan biosynthesis. In terms of biological role, catalyzes the addition of meso-diaminopimelic acid to the nucleotide precursor UDP-N-acetylmuramoyl-L-alanyl-D-glutamate (UMAG) in the biosynthesis of bacterial cell-wall peptidoglycan. This is UDP-N-acetylmuramoyl-L-alanyl-D-glutamate--2,6-diaminopimelate ligase from Geobacillus kaustophilus (strain HTA426).